Consider the following 486-residue polypeptide: ATP synthase subunit beta (486 aa).

164 to 171 (GGAGVGKT) serves as a coordination point for ATP.

The protein belongs to the ATPase alpha/beta chains family. F-type ATPases have 2 components, CF(1) - the catalytic core - and CF(0) - the membrane proton channel. CF(1) has five subunits: alpha(3), beta(3), gamma(1), delta(1), epsilon(1). CF(0) has four main subunits: a(1), b(1), b'(1) and c(9-12).

The protein localises to the cellular thylakoid membrane. It catalyses the reaction ATP + H2O + 4 H(+)(in) = ADP + phosphate + 5 H(+)(out). Functionally, produces ATP from ADP in the presence of a proton gradient across the membrane. The catalytic sites are hosted primarily by the beta subunits. This is ATP synthase subunit beta from Prochlorococcus marinus (strain MIT 9301).